The sequence spans 257 residues: Snake venom serine protease Haly-2 (257 aa).

The N-terminal stretch at 1–18 (MVLIRVLANLLILQLSYA) is a signal peptide. The propeptide occupies 19 to 24 (QKSSEL). The Peptidase S1 domain occupies 25–248 (IIGGDECNIN…HLEWIRSIIA (224 aa)). Intrachain disulfides connect Cys31/Cys162, Cys49/Cys65, Cys97/Cys255, Cys141/Cys209, Cys173/Cys188, and Cys199/Cys224. Catalysis depends on His64, which acts as the Charge relay system. The N-linked (GlcNAc...) asparagine glycan is linked to Asn100. Asp109 functions as the Charge relay system in the catalytic mechanism. Ser203 acts as the Charge relay system in catalysis.

It belongs to the peptidase S1 family. Snake venom subfamily. In terms of assembly, monomer. As to expression, expressed by the venom gland.

The protein localises to the secreted. Snake venom serine protease that may act in the hemostasis system of the prey. This is Snake venom serine protease Haly-2 from Gloydius brevicauda (Korean slamosa snake).